Consider the following 563-residue polypeptide: Zinc finger protein 503 (563 aa).

A compositionally biased stretch (polar residues) spans 1–10; that stretch reads MITSPSASRN. Disordered stretches follow at residues 1 to 48 and 101 to 226; these read MITS…PLRQ and SQIG…TSVS. 2 stretches are compositionally biased toward low complexity: residues 19 to 33 and 112 to 122; these read SSSSSSRNNSSAVAS and SKLSSVTSNGS. Over residues 174–194 the composition is skewed to polar residues; the sequence is ATCQPFTPRTGSPNSSTSASP. Basic and acidic residues predominate over residues 199-211; it reads GKGERDEKKDSDC. Polar residues predominate over residues 212–226; the sequence is NKNCSSDGSAPTSVS. The C2H2-type zinc finger occupies 431–459; sequence HVCNWVSANGPCDKRFSSSEELLNHLRTH.

The protein belongs to the Elbow/Noc family. In terms of assembly, interacts with nlz1.

The protein localises to the nucleus. Its function is as follows. Required for segmental gene expression during hindbrain development. May function as a transcriptional repressor. The polypeptide is Zinc finger protein 503 (znf503) (Danio rerio (Zebrafish)).